The primary structure comprises 449 residues: Phosphoglucosamine mutase (449 aa).

Ser-104 serves as the catalytic Phosphoserine intermediate. Residues Ser-104, Asp-243, Asp-245, and Asp-247 each contribute to the Mg(2+) site. Position 104 is a phosphoserine (Ser-104).

Belongs to the phosphohexose mutase family. Mg(2+) is required as a cofactor. In terms of processing, activated by phosphorylation.

It catalyses the reaction alpha-D-glucosamine 1-phosphate = D-glucosamine 6-phosphate. Its function is as follows. Catalyzes the conversion of glucosamine-6-phosphate to glucosamine-1-phosphate. This Xanthomonas oryzae pv. oryzae (strain PXO99A) protein is Phosphoglucosamine mutase.